The primary structure comprises 188 residues: Heparin-binding hemagglutinin homolog (188 aa).

Residues 162–188 (KAAAPARKAPAKKAPAKKAPAKKVTQK) are disordered. Basic residues predominate over residues 170–188 (APAKKAPAKKAPAKKVTQK).

It to M.tuberculosis HbhA.

Its function is as follows. Might mediate adherence to host cells by binding sulfated glycoconjugates. In Mycobacterium leprae (strain TN), this protein is Heparin-binding hemagglutinin homolog (hbhA).